A 102-amino-acid polypeptide reads, in one-letter code: Cysteine-rich venom protein VAR9 (102 aa).

The N-terminal stretch at 1-19 (MILLKLYLTLAAILCQSRG) is a signal peptide. The 40-residue stretch at 41–80 (NKHNDLRRTVDPPAKNMLKMSWDNIIAESAKRAALRCNYK) folds into the SCP domain.

It belongs to the CRISP family. Post-translationally, contains 8 disulfide bonds. In terms of tissue distribution, expressed by the venom gland.

The protein localises to the secreted. Functionally, blocks ryanodine receptors, and potassium channels. This chain is Cysteine-rich venom protein VAR9, found in Varanus varius (Lace monitor lizard).